The sequence spans 53 residues: UPF0391 membrane protein ETA_06630 (53 aa).

2 helical membrane passes run W4–A24 and A27–F47.

This sequence belongs to the UPF0391 family.

The protein localises to the cell membrane. The protein is UPF0391 membrane protein ETA_06630 of Erwinia tasmaniensis (strain DSM 17950 / CFBP 7177 / CIP 109463 / NCPPB 4357 / Et1/99).